A 78-amino-acid chain; its full sequence is DNA-directed RNA polymerase subunit Rpo5 (78 aa).

Belongs to the archaeal Rpo5/eukaryotic RPB5 RNA polymerase subunit family. In terms of assembly, part of the RNA polymerase complex.

It localises to the cytoplasm. It carries out the reaction RNA(n) + a ribonucleoside 5'-triphosphate = RNA(n+1) + diphosphate. Functionally, DNA-dependent RNA polymerase (RNAP) catalyzes the transcription of DNA into RNA using the four ribonucleoside triphosphates as substrates. The protein is DNA-directed RNA polymerase subunit Rpo5 of Methanothrix thermoacetophila (strain DSM 6194 / JCM 14653 / NBRC 101360 / PT) (Methanosaeta thermophila).